The primary structure comprises 188 residues: Elongation factor P (188 aa).

N6-(3,6-diaminohexanoyl)-5-hydroxylysine is present on lysine 34.

It belongs to the elongation factor P family. May be beta-lysylated on the epsilon-amino group of Lys-34 by the combined action of EpmA and EpmB, and then hydroxylated on the C5 position of the same residue by EpmC (if this protein is present). Lysylation is critical for the stimulatory effect of EF-P on peptide-bond formation. The lysylation moiety may extend toward the peptidyltransferase center and stabilize the terminal 3-CCA end of the tRNA. Hydroxylation of the C5 position on Lys-34 may allow additional potential stabilizing hydrogen-bond interactions with the P-tRNA.

The protein localises to the cytoplasm. Its pathway is protein biosynthesis; polypeptide chain elongation. Functionally, involved in peptide bond synthesis. Alleviates ribosome stalling that occurs when 3 or more consecutive Pro residues or the sequence PPG is present in a protein, possibly by augmenting the peptidyl transferase activity of the ribosome. Modification of Lys-34 is required for alleviation. The protein is Elongation factor P of Stenotrophomonas maltophilia (strain K279a).